Reading from the N-terminus, the 230-residue chain is Cytidylate kinase (230 aa).

12 to 20 (GPSGAGKGT) is an ATP binding site.

The protein belongs to the cytidylate kinase family. Type 1 subfamily.

It localises to the cytoplasm. The catalysed reaction is CMP + ATP = CDP + ADP. The enzyme catalyses dCMP + ATP = dCDP + ADP. The sequence is that of Cytidylate kinase from Shewanella baltica (strain OS223).